We begin with the raw amino-acid sequence, 351 residues long: Hepatocyte nuclear factor 3-gamma (351 aa).

A compositionally biased stretch (pro residues) spans 52–73; sequence PGGLPASPLPTGPLAPPAPTAP. A disordered region spans residues 52 to 94; sequence PGGLPASPLPTGPLAPPAPTAPLGPTFPGLGASTGGGSSSGYG. Over residues 83–94 the composition is skewed to gly residues; the sequence is ASTGGGSSSGYG. Residues 118 to 212 constitute a DNA-binding region (fork-head); it reads KPPYSYISLI…ENGCYLRRQK (95 aa). Positions 218-275 are disordered; that stretch reads EKVKKGGGGSSASRNSAGSASTATAPAATVASTPQPQPPPPEPEAQGGDEVGALDCGS. Over residues 228–251 the composition is skewed to low complexity; it reads SASRNSAGSASTATAPAATVASTP.

It localises to the nucleus. In terms of biological role, transcription activator for a number of liver genes such as AFP, albumin, tyrosine aminotransferase, PEPCK, etc. Interacts with the cis-acting regulatory regions of these genes. The sequence is that of Hepatocyte nuclear factor 3-gamma (FOXA3) from Bos taurus (Bovine).